The chain runs to 892 residues: Transmembrane channel-like protein 2-B (892 aa).

Residues 29–125 (GINQNLRREE…DESMSEGEMA (97 aa)) are disordered. Basic residues-rich tracts occupy residues 48 to 58 (RRAKKRRMNRR) and 66 to 77 (RSKKMRMRVRKN). Residues 103 to 112 (PSSCSSSSDN) show a composition bias toward low complexity. A run of 9 helical transmembrane segments spans residues 235 to 255 (LVLF…MGIP), 275 to 295 (FSVL…YGFY), 308 to 328 (LPLS…MVVI), 403 to 423 (LANV…YAVV), 444 to 464 (EVEI…EAIA), 482 to 502 (IFAL…DEVN), 616 to 636 (LIFN…LVGI), 671 to 691 (FYMG…IYSI), and 736 to 756 (GLII…LNAV). Positions 772–785 (QMQRDEEKNRRNNK) are enriched in basic and acidic residues. Disordered stretches follow at residues 772–791 (QMQR…TNQV) and 796–892 (EDLL…PPRR). Pro residues predominate over residues 862-878 (PRQPGPLPGNPRGPPPG).

The protein belongs to the TMC family. In terms of tissue distribution, in adults, expression is restricted to the hair cells of inner ear and lateral line organ. Expressed at higher levels in the larval lateral-line neuromasts than in the larval inner ear.

The protein resides in the membrane. Probable component of the mechanotransducer (MET) non-selective cation channel. The polypeptide is Transmembrane channel-like protein 2-B (Danio rerio (Zebrafish)).